The following is a 687-amino-acid chain: Homeobox-leucine zipper protein HDG12 (687 aa).

The segment at 1–32 (MEFLGDSQNHDSSETEKKNKKKKRFHRHTPHQ) is disordered. Residues 8-17 (QNHDSSETEK) are compositionally biased toward basic and acidic residues. Over residues 18–30 (KNKKKKRFHRHTP) the composition is skewed to basic residues. A DNA-binding region (homeobox) is located at residues 21–80 (KKKRFHRHTPHQIQRLESTFNECQHPDEKQRNQLSRELGLAPRQIKFWFQNRRTQKKAQH). The stretch at 87–150 (ALKEENDKIR…LERVSSIAAK (64 aa)) forms a coiled coil. The START domain maps to 206-440 (SEMDKSLMTN…LQRMCERFTN (235 aa)).

It belongs to the HD-ZIP homeobox family. Class IV subfamily. As to quaternary structure, interacts with BBM. As to expression, expressed in apical meristems and young epidermal tissue including trichomes and stipules. Expressed in lateral root tips, the L1 layer of apical inflorescence meristems and early flower primordia, carpel and stamen filament epidermis, stigma papillae, ovule primordia, nucellus and embryo.

The protein localises to the nucleus. In terms of biological role, probable transcription factor that acts as a negative regulator of trichome branching in association with HDG11. Seems to promote cell differentiation. May regulate cell differentiation and proliferation during root and shoot meristem development. Acts as a positive regulator of SCL18/LAS expression. Involved, together with PDF2, in the regulation of flower organs development by promoting the expression of APETALA 3 (AP3) in the epidermis and internal cell layers of developing flowers. The polypeptide is Homeobox-leucine zipper protein HDG12 (Arabidopsis thaliana (Mouse-ear cress)).